Consider the following 535-residue polypeptide: Prolyl 4-hydroxylase subunit alpha-2 (535 aa).

The first 21 residues, Met-1–Ala-21, serve as a signal peptide directing secretion. Asn-115 carries an N-linked (GlcNAc...) asparagine glycan. One copy of the TPR repeat lies at Ser-207–His-240. Asn-264 carries N-linked (GlcNAc...) asparagine glycosylation. Residues Thr-412–Glu-520 enclose the Fe2OG dioxygenase domain. 2 residues coordinate Fe cation: His-430 and Asp-432. The residue at position 480 (Lys-480) is an N6-succinyllysine. His-501 is a Fe cation binding site. A 2-oxoglutarate-binding site is contributed by Lys-511.

It belongs to the P4HA family. In terms of assembly, heterotetramer of two alpha-2 chains and two beta chains (P4HB) (the beta chain is the multi-functional PDI), where P4HB plays the role of a structural subunit; this tetramer catalyzes the formation of 4-hydroxyproline in collagen. Requires Fe(2+) as cofactor. L-ascorbate is required as a cofactor. As to expression, expressed in the heart, placenta, lung and pancreas.

It is found in the endoplasmic reticulum lumen. The catalysed reaction is L-prolyl-[collagen] + 2-oxoglutarate + O2 = trans-4-hydroxy-L-prolyl-[collagen] + succinate + CO2. Its activity is regulated as follows. Inhibited by poly(L-proline) only at very high concentrations. In terms of biological role, catalyzes the post-translational formation of 4-hydroxyproline in -Xaa-Pro-Gly- sequences in collagens and other proteins. The sequence is that of Prolyl 4-hydroxylase subunit alpha-2 (P4HA2) from Homo sapiens (Human).